Reading from the N-terminus, the 764-residue chain is Probable glutamate--tRNA ligase, cytoplasmic (764 aa).

L-glutamate is bound at residue 228–230 (RFP). The 'HIGH' region motif lies at 233-242 (PSGYMHIGHC). Residue His-238 coordinates ATP. L-glutamate is bound by residues Asp-264, 404–408 (YDFAC), and Arg-422. ATP-binding positions include Glu-425 and 460-464 (LLSKR). Residues 460-464 (LLSKR) carry the 'KMSKS' region motif.

Belongs to the class-I aminoacyl-tRNA synthetase family. Glutamate--tRNA ligase type 2 subfamily.

Its subcellular location is the cytoplasm. The enzyme catalyses tRNA(Glu) + L-glutamate + ATP = L-glutamyl-tRNA(Glu) + AMP + diphosphate. In terms of biological role, catalyzes the attachment of glutamate to tRNA(Glu) in a two-step reaction: glutamate is first activated by ATP to form Glu-AMP and then transferred to the acceptor end of tRNA(Glu). This Dictyostelium discoideum (Social amoeba) protein is Probable glutamate--tRNA ligase, cytoplasmic (gluS).